A 283-amino-acid chain; its full sequence is Polyamine aminopropyltransferase (283 aa).

Positions 2-237 (ELWYTEEHTD…GHWLFGFASK (236 aa)) constitute a PABS domain. Position 31 (glutamine 31) interacts with S-methyl-5'-thioadenosine. The spermidine site is built by histidine 62 and aspartate 86. S-methyl-5'-thioadenosine is bound by residues glutamate 106 and 137-138 (DG). Residue aspartate 155 is the Proton acceptor of the active site. 155–158 (DSTD) serves as a coordination point for spermidine. Proline 162 lines the S-methyl-5'-thioadenosine pocket.

The protein belongs to the spermidine/spermine synthase family. In terms of assembly, homodimer or homotetramer.

The protein resides in the cytoplasm. It catalyses the reaction S-adenosyl 3-(methylsulfanyl)propylamine + putrescine = S-methyl-5'-thioadenosine + spermidine + H(+). It participates in amine and polyamine biosynthesis; spermidine biosynthesis; spermidine from putrescine: step 1/1. Functionally, catalyzes the irreversible transfer of a propylamine group from the amino donor S-adenosylmethioninamine (decarboxy-AdoMet) to putrescine (1,4-diaminobutane) to yield spermidine. The polypeptide is Polyamine aminopropyltransferase (Clostridium perfringens (strain 13 / Type A)).